A 2073-amino-acid polypeptide reads, in one-letter code: Histone acetyltransferase KAT6B (2073 aa).

An SAMD1-like winged helix (WH) domain is found at 1-77; the sequence is MVKLANPLYT…LASYKDPDNP (77 aa). The disordered stretch occupies residues 72–97; it reads KDPDNPGRFSSVKPGTFPKSAKGSRG. The H15 domain maps to 103 to 176; it reads RNVDWNKLLR…KDGPQYRVNY (74 aa). 2 consecutive PHD-type zinc fingers follow at residues 213 to 272 and 269 to 320; these read IPIC…CKTC and CKTC…CRPK. Residue Ser-355 is modified to Phosphoserine. Disordered stretches follow at residues 360–409, 442–531, 553–583, and 639–663; these read EGSM…RPGA, FTPS…VPSL, TQGQ…TAKS, and VTPQ…PDQD. The tract at residues 361–717 is negatively regulates HAT activity; sequence GSMNAFTGRG…ECESGVEDCG (357 aa). The segment covering 379–399 has biased composition (polar residues); the sequence is KVCTTPSSGHAASGKDSSSRL. The segment covering 447–460 has biased composition (basic and acidic residues); sequence DGRRSRGEIIDFSK. Positions 470–485 are enriched in polar residues; that stretch reads QKQSCTSHVLATGTTQ. A compositionally biased stretch (pro residues) spans 488-499; the sequence is KPPPSSLPPPTP. Over residues 501–531 the composition is skewed to low complexity; sequence SGQSPSSQKSSTATSSPSPQSSSSQCSVPSL. Ser-647 is modified (phosphoserine). Lys-673 is covalently cross-linked (Glycyl lysine isopeptide (Lys-Gly) (interchain with G-Cter in SUMO2)). The MYST-type HAT domain maps to 715–989; that stretch reads DCGRYPSVIE…LDPDSLRWTP (275 aa). Residues 718–1008 form a catalytic region; sequence RYPSVIEFGK…EEEREAEKEA (291 aa). A C2HC MYST-type zinc finger spans residues 748-773; that stretch reads LYLCEFCLKYMKSKNILLRHSKKCGW. The interaction with BRPF1 stretch occupies residues 752-1008; the sequence is EFCLKYMKSK…EEEREAEKEA (257 aa). Lys-815 is modified (N6-acetyllysine; by autocatalysis). Acetyl-CoA contacts are provided by residues 856 to 860 and 865 to 871; these read SCIMI and QRQGFGR. Residue Glu-891 is the Proton donor/acceptor of the active site. Residue Ser-895 participates in acetyl-CoA binding. Disordered stretches follow at residues 1022–1452, 1484–1538, and 1580–1619; these read EQEI…FKEV, SCNS…MEID, and QSPQ…SPSV. Residues 1025 to 1043 are compositionally biased toward polar residues; it reads ILSTRANSRQSPAKVQSKN. An N6-acetyllysine mark is found at Lys-1038, Lys-1042, and Lys-1044. At Ser-1048 the chain carries Phosphoserine. Residues 1069–1105 are compositionally biased toward acidic residues; it reads SEEEEEEEDEEEEEEEEEEEEDEEEEEEEEEEEEEEN. Residues 1106–1117 show a composition bias toward polar residues; it reads IQSSPPRLTKPQ. A compositionally biased stretch (basic residues) spans 1121-1140; it reads IKRKRPFVLKKKRGRKRRRI. The segment covering 1142–1155 has biased composition (low complexity); it reads SSVTTETISETTEV. The span at 1187 to 1200 shows a compositional bias: basic residues; it reads PVLRKAFQHQPGKK. Composition is skewed to basic and acidic residues over residues 1229–1243, 1306–1315, and 1341–1350; these read SNLK…EPLK, RIEEEVKETG, and EKPEDDLIKP. The segment covering 1351-1374 has biased composition (acidic residues); it reads EEEEEEEEEEEEEEEEEEGEEEEG. 2 stretches are compositionally biased toward basic and acidic residues: residues 1378–1390 and 1396–1407; these read VEKD…SQEK and STEKEDSARLDD. Acidic residues predominate over residues 1408-1417; sequence HEEEEEEDEE. The span at 1433-1452 shows a compositional bias: basic and acidic residues; it reads HMESAEVEKEELPRESFKEV. The segment covering 1498 to 1507 has biased composition (acidic residues); that stretch reads AVPESDEEPP. Positions 1513–1529 are enriched in basic and acidic residues; the sequence is QKQDQKNSKEVDTEFKE. An interaction with RUNX1 and RUNX2 region spans residues 1560 to 2073; sequence QDCAETQEAC…QSLNGSYMRR (514 aa). Positions 1580–1591 are enriched in polar residues; it reads QSPQIATTLDDC. Positions 1594–1611 are enriched in low complexity; the sequence is SDHSSPVSSVHSHPGQSV.

This sequence belongs to the MYST (SAS/MOZ) family. As to quaternary structure, component of the MOZ/MORF complex composed at least of ING5, KAT6A, KAT6B, MEAF6 and one of BRPF1, BRD1/BRPF2 and BRPF3. Interacts with RUNX1 and RUNX2. Post-translationally, autoacetylated. Autoacetylation at Lys-815 is required for proper function. In terms of tissue distribution, ubiquitously expressed, with high levels in heart, pancreas, testis and ovary.

Its subcellular location is the nucleus. The catalysed reaction is L-lysyl-[protein] + acetyl-CoA = N(6)-acetyl-L-lysyl-[protein] + CoA + H(+). Histone acetyltransferase which may be involved in both positive and negative regulation of transcription. Required for RUNX2-dependent transcriptional activation. May be involved in cerebral cortex development. Component of the MOZ/MORF complex which has a histone H3 acetyltransferase activity. In Homo sapiens (Human), this protein is Histone acetyltransferase KAT6B (KAT6B).